The sequence spans 469 residues: Asparagine--tRNA ligase (469 aa).

The protein belongs to the class-II aminoacyl-tRNA synthetase family. Homodimer.

Its subcellular location is the cytoplasm. It catalyses the reaction tRNA(Asn) + L-asparagine + ATP = L-asparaginyl-tRNA(Asn) + AMP + diphosphate + H(+). This is Asparagine--tRNA ligase from Porphyromonas gingivalis (strain ATCC BAA-308 / W83).